The sequence spans 267 residues: Large ribosomal subunit protein uL4 (267 aa).

It belongs to the universal ribosomal protein uL4 family. Part of the 50S ribosomal subunit.

Functionally, one of the primary rRNA binding proteins, this protein initially binds near the 5'-end of the 23S rRNA. It is important during the early stages of 50S assembly. It makes multiple contacts with different domains of the 23S rRNA in the assembled 50S subunit and ribosome. Forms part of the polypeptide exit tunnel. The chain is Large ribosomal subunit protein uL4 from Saccharolobus solfataricus (strain ATCC 35092 / DSM 1617 / JCM 11322 / P2) (Sulfolobus solfataricus).